A 441-amino-acid chain; its full sequence is Arginine biosynthesis bifunctional protein ArgJ, mitochondrial (441 aa).

The transit peptide at 1 to 8 directs the protein to the mitochondrion; the sequence is MRISSTLL. Positions 177, 204, 215, 301, 436, and 441 each coordinate substrate. Thr-215 (nucleophile) is an active-site residue.

This sequence belongs to the ArgJ family. As to quaternary structure, heterodimer of an alpha and a beta chain. The alpha and beta chains are autoproteolytically processed from a single precursor protein within the mitochondrion.

The protein localises to the mitochondrion matrix. It carries out the reaction N(2)-acetyl-L-ornithine + L-glutamate = N-acetyl-L-glutamate + L-ornithine. It catalyses the reaction L-glutamate + acetyl-CoA = N-acetyl-L-glutamate + CoA + H(+). The protein operates within amino-acid biosynthesis; L-arginine biosynthesis; L-ornithine and N-acetyl-L-glutamate from L-glutamate and N(2)-acetyl-L-ornithine (cyclic): step 1/1. It participates in amino-acid biosynthesis; L-arginine biosynthesis; N(2)-acetyl-L-ornithine from L-glutamate: step 1/4. Its activity is regulated as follows. Inhibited by ornithine. Functionally, catalyzes two activities which are involved in the cyclic version of arginine biosynthesis: the synthesis of acetylglutamate from glutamate and acetyl-CoA, and of ornithine by transacetylation between acetylornithine and glutamate. This chain is Arginine biosynthesis bifunctional protein ArgJ, mitochondrial, found in Saccharomyces cerevisiae (strain ATCC 204508 / S288c) (Baker's yeast).